The sequence spans 474 residues: ATP synthase subunit beta 1 (474 aa).

157–164 (GGAGVGKT) contributes to the ATP binding site.

Belongs to the ATPase alpha/beta chains family. As to quaternary structure, F-type ATPases have 2 components, CF(1) - the catalytic core - and CF(0) - the membrane proton channel. CF(1) has five subunits: alpha(3), beta(3), gamma(1), delta(1), epsilon(1). CF(0) has three main subunits: a(1), b(2) and c(9-12). The alpha and beta chains form an alternating ring which encloses part of the gamma chain. CF(1) is attached to CF(0) by a central stalk formed by the gamma and epsilon chains, while a peripheral stalk is formed by the delta and b chains.

It localises to the cell inner membrane. The catalysed reaction is ATP + H2O + 4 H(+)(in) = ADP + phosphate + 5 H(+)(out). In terms of biological role, produces ATP from ADP in the presence of a proton gradient across the membrane. The catalytic sites are hosted primarily by the beta subunits. This Albidiferax ferrireducens (strain ATCC BAA-621 / DSM 15236 / T118) (Rhodoferax ferrireducens) protein is ATP synthase subunit beta 1.